The following is a 382-amino-acid chain: Probable G-protein coupled receptor 132 (382 aa).

The Extracellular segment spans residues 1-42; that stretch reads MRSEPTNAAGNTTLGVTSVLQSTSVPSSETCHVSYEESRVVL. The N-linked (GlcNAc...) asparagine glycan is linked to Asn-11. Residues 43-65 traverse the membrane as a helical segment; that stretch reads VVVYSAVCLLGLPANCLTAWLTL. At 66–76 the chain is on the cytoplasmic side; sequence LQVLQRNVLAV. The helical transmembrane segment at 77–99 threads the bilayer; sequence YLFCLSLCELLYISTVPLWIIYI. The Extracellular segment spans residues 100-113; the sequence is QNQHKWNLGPQACK. A disulfide bridge connects residues Cys-112 and Cys-184. A helical membrane pass occupies residues 114-135; that stretch reads VTAYIFFCNIYISILLLCCISC. Topologically, residues 136–155 are cytoplasmic; that stretch reads DRYMAVVYALESRGHRHQRT. A helical membrane pass occupies residues 156–175; the sequence is AVTISACVILLVGLVNYPVF. Residues 176–198 are Extracellular-facing; that stretch reads DMKVEKSFCFEPLRMNSKIAGYH. Residues 199–221 form a helical membrane-spanning segment; the sequence is YLRFTFGFAIPLGILAFTNHQIF. Residues 222–241 lie on the Cytoplasmic side of the membrane; sequence RSIKLSDSLSAAQKNKVKRS. Residues 242–261 traverse the membrane as a helical segment; the sequence is AIAVVTIFLVCFAPYHVVLL. Topologically, residues 262–286 are extracellular; the sequence is VKAASFSFYQGDMDAVCAFESRLYT. A helical membrane pass occupies residues 287-309; sequence VSMVFLCLSTVNSVADPIIYVLG. Residues 310–382 lie on the Cytoplasmic side of the membrane; the sequence is TDHSRQEVSR…SPERLPEELC (73 aa).

This sequence belongs to the G-protein coupled receptor 1 family. As to expression, highly expressed in hematopoietic tissues rich in lymphocytes like spleen and thymus. Weakly expressed in heart and lung. Highly expressed in infiltrating macrophages within atherosclerotic lesions.

It is found in the cell membrane. May be a receptor for oxidized free fatty acids derived from linoleic and arachidonic acids such as 9-hydroxyoctadecadienoic acid (9-HODE). Activates a G alpha protein, most likely G alpha(q). May be involved in apoptosis. Functions at the G2/M checkpoint to delay mitosis. May function as a sensor that monitors the oxidative states and mediates appropriate cellular responses such as secretion of paracrine signals and attenuation of proliferation. May mediate ths accumulation of intracellular inositol phosphates at acidic pH through proton-sensing activity. This chain is Probable G-protein coupled receptor 132 (Gpr132), found in Mus musculus (Mouse).